The sequence spans 575 residues: Sialate:O-sulfotransferase 1 (575 aa).

The Cytoplasmic portion of the chain corresponds to 1–14 (MAKPFFRLQKFLRR). A helical; Signal-anchor for type II membrane protein membrane pass occupies residues 15–35 (TQFLLFFLTAAYLMTGSLLLL). Residues 36–575 (QRVRVALPQG…TGLPREYVPR (540 aa)) lie on the Extracellular side of the membrane. 2 consecutive WSC domains span residues 142 to 234 (RGTY…YRVD) and 245 to 340 (TATY…DTRC). N-linked (GlcNAc...) asparagine glycans are attached at residues Asn257 and Asn348.

This sequence belongs to the WSCD family.

It is found in the golgi apparatus membrane. It carries out the reaction a ganglioside GM1b + 3'-phosphoadenylyl sulfate = an 8-O-sulfo-ganglioside GM1b + adenosine 3',5'-bisphosphate + H(+). Its function is as follows. Sialate:O-sulfotransferase which catalyzes 8-O-sulfation at the Sia-glycan level using 3'-phosphoadenosine 5'-phosphosulfate (PAPS) as a donor, forming 8-O-sulfated Sia (Sia8S)-glycans. Displays selectivity toward glycolipids such as GM1 gangliosides. The chain is Sialate:O-sulfotransferase 1 (WSCD1) from Homo sapiens (Human).